The following is a 1393-amino-acid chain: MAERANLVFHNKVIDGTAIKRLISRLIDHFGMAYTSHILDQVKALGFQQATATSISLGIDDLLTIPSKGWLVQDAEQQSLILEKHHHFGNVHAVEKLRQSIEIWYATSEYLRQEMNPNFRMTDPFNPVHIMSFSGARGNASQVHQLVGMRGLMSDPQGQMIDLPIQSNLREGLSLTEYIISCYGARKGVVDTAVRTSDAGYLTRRLVEVVQHIVVRRTDCGTTRGISVSPQKRTLPERIFIQTLIGRVLADDIYMGPRCIAIRNQDIGLGLVDRFRAFRTQPISIRTPFTCRSTSWICRLCYGRSPTHGDLVELGEAVGIIAGQSIGEPGTQLTLRTFHTGGVFTGGTAEHVRAPFNGKIKFNEDLVHPTRTRHGHPAFLCYRDLYVIIESEDIIHKVAIPPKSFLLVQNDQYVESEQVIAEIRAGTYTLNLKERVRKHIYSDSEGEMHWSTDVYHSPEFTYSNVHLLPKTSHLWILSGGSYKFSVVPFSLHKDQDQISIHYLSAERRYISRFSVNNDQVRHNLFSSDFSDKKEERIYDYSELNRIIGTGHCDFIYSAILHENADLLAKRRRNRFIIPFQLIQDQEKELMLHSHSGISMEIPINGIFRRKSILAFFDDPRYRRKSSGITKYGTLGAHSIVKREDVIEYRGVKKVKPKYQMKVDRFFFIPEEVHILSESSSIMVRNNSIIGVDTPITLNTRSQVGGLVRVERKKKRIELKIFSGNIYFPGERDKISRHSGILIPPGTGKTNSKESKKLKNWIYVQRITPTKKKYFVLVRPVTPYEIPDGLNLATLFPQDPFQEKDNMQLRAVNYILYGNGKPTRRISDTSIQLVRTCLVLSWDQDNKSSFAEEVCASFVEVRTNGLIRDFLRIDLVKSHIFYIRKRNDPSGSELISDNRSDRTNKNPFYSIYSNARIQQSFSQNHGTIHTLLNRNKESQSLIILSASNCFRMGPFNDVKYHNVIKQSIKKDPLIPIKNLLGPLGTAPKIANFYSSFYPLITHNQTSVAKYFELDNLKQAFQVLNYYLIAENGRIYNFDPCRNIFLNAVNLNWYFPHHHYHHNYCEETSTIISLGQFICENVCIAKSGPRLKSGQVFIVQADSIVIRSAKPYLATPGATVHGHYGETLYEGDTLVTFIYEKSRSGDITQGLPKVEQVLEVRSIDSISMNLEKRIEGWNECITRILGIPWGFVIGAELTIVQSRLSLVNKIQKVYRSQGVQIHNRHIEIIVRQITSKVLVSEDGMSNVFLPGELIGLLRAERTGRALEEAICYRAVLLGITRASLNTQSFISEASFQETARVLAKAALRGRIDWLKGLKENVVLGGMIPAGTGFKGLVHRSRQHNNILLETKKKNFFGGEMRDIFFHHRELFDSCISNNLHDTSGRSFIGIEFNDS.

Positions 220, 291, 298, and 301 each coordinate Zn(2+).

The protein belongs to the RNA polymerase beta' chain family. RpoC2 subfamily. In terms of assembly, in plastids the minimal PEP RNA polymerase catalytic core is composed of four subunits: alpha, beta, beta', and beta''. When a (nuclear-encoded) sigma factor is associated with the core the holoenzyme is formed, which can initiate transcription. It depends on Zn(2+) as a cofactor.

The protein localises to the plastid. It is found in the chloroplast. The catalysed reaction is RNA(n) + a ribonucleoside 5'-triphosphate = RNA(n+1) + diphosphate. Its function is as follows. DNA-dependent RNA polymerase catalyzes the transcription of DNA into RNA using the four ribonucleoside triphosphates as substrates. The chain is DNA-directed RNA polymerase subunit beta'' from Gossypium hirsutum (Upland cotton).